Consider the following 299-residue polypeptide: Probable alpha-L-glutamate ligase (299 aa).

The 184-residue stretch at 104–287 (LQLLAREGIE…VSGKIIEFLE (184 aa)) folds into the ATP-grasp domain. Residues lysine 141, 178-179 (EF), aspartate 187, and 211-213 (RSN) each bind ATP. Residues aspartate 248, glutamate 260, and asparagine 262 each contribute to the Mg(2+) site. Residues aspartate 248, glutamate 260, and asparagine 262 each contribute to the Mn(2+) site.

This sequence belongs to the RimK family. Mg(2+) serves as cofactor. It depends on Mn(2+) as a cofactor.

In Trichodesmium erythraeum (strain IMS101), this protein is Probable alpha-L-glutamate ligase.